Reading from the N-terminus, the 475-residue chain is Sulfate adenylyltransferase subunit 1 (475 aa).

Residues 25–239 form the tr-type G domain; the sequence is KSLLRFLTCG…EVLETVEIQR (215 aa). The segment at 34–41 is G1; it reads GSVDDGKS. 34-41 contacts GTP; sequence GSVDDGKS. Residues 92–96 form a G2 region; the sequence is GITID. Residues 113 to 116 are G3; sequence DTPG. GTP contacts are provided by residues 113-117 and 168-171; these read DTPGH and NKMD. Residues 168-171 form a G4 region; that stretch reads NKMD. Residues 206 to 208 are G5; it reads SAL.

Belongs to the TRAFAC class translation factor GTPase superfamily. Classic translation factor GTPase family. CysN/NodQ subfamily. Heterodimer composed of CysD, the smaller subunit, and CysN.

It carries out the reaction sulfate + ATP + H(+) = adenosine 5'-phosphosulfate + diphosphate. Its pathway is sulfur metabolism; hydrogen sulfide biosynthesis; sulfite from sulfate: step 1/3. Its function is as follows. With CysD forms the ATP sulfurylase (ATPS) that catalyzes the adenylation of sulfate producing adenosine 5'-phosphosulfate (APS) and diphosphate, the first enzymatic step in sulfur assimilation pathway. APS synthesis involves the formation of a high-energy phosphoric-sulfuric acid anhydride bond driven by GTP hydrolysis by CysN coupled to ATP hydrolysis by CysD. The sequence is that of Sulfate adenylyltransferase subunit 1 from Shigella flexneri.